Consider the following 224-residue polypeptide: Urease accessory protein UreF (224 aa).

It belongs to the UreF family. As to quaternary structure, ureD, UreF and UreG form a complex that acts as a GTP-hydrolysis-dependent molecular chaperone, activating the urease apoprotein by helping to assemble the nickel containing metallocenter of UreC. The UreE protein probably delivers the nickel.

The protein localises to the cytoplasm. Functionally, required for maturation of urease via the functional incorporation of the urease nickel metallocenter. This Pseudomonas fluorescens (strain SBW25) protein is Urease accessory protein UreF.